The following is a 184-amino-acid chain: Lysozyme 1 (184 aa).

An N-terminal signal peptide occupies residues 1-20 (MNGLILFCAVVFATAVCTYG). An I-type lysozyme domain is found at 69-184 (TGMVSQQCLR…WRRVQAQGCN (116 aa)). 6 disulfide bridges follow: Cys76-Cys152, Cys81-Cys87, Cys92-Cys101, Cys114-Cys134, Cys124-Cys130, and Cys148-Cys166. The active-site Proton donor is the Glu84. The active-site Nucleophile is the Asp95. 107-113 (KRAYWID) lines the substrate pocket. Residues Tyr138 and 159-161 (HNG) each bind substrate.

Hemolymph, labial palps, non-vesiculated cells of mantle connective tissue, cells of interlamellar junctions and epithelia surrounding the water tubes of the gills.

The protein resides in the secreted. It catalyses the reaction Hydrolysis of (1-&gt;4)-beta-linkages between N-acetylmuramic acid and N-acetyl-D-glucosamine residues in a peptidoglycan and between N-acetyl-D-glucosamine residues in chitodextrins.. Has antibacterial activity against the Gram-positive bacteria L.garvieae, M.luteus and Enterococcus sp., and the Gram-negative bacteria E.coli and V.vulnificus. Weak antibacterial activity against the Gram-negative bacterium A.hydrophila. No antibacterial activity detected against the Gram-positive bacterium S.iniae or against the Gram-negative bacterium E.ictaluri. Shows some chitinase activity but no isopeptidase activity. The polypeptide is Lysozyme 1 (Crassostrea virginica (Eastern oyster)).